The chain runs to 346 residues: [LysW]-lysine/[LysW]-ornithine hydrolase (346 aa).

Histidine 68 lines the Zn(2+) pocket. Aspartate 70 is an active-site residue. A Zn(2+)-binding site is contributed by aspartate 92. The active-site Proton acceptor is the glutamate 122. Zn(2+)-binding residues include glutamate 123, glutamate 146, and histidine 317.

The protein belongs to the peptidase M20A family. LysK subfamily. The cofactor is Zn(2+). It depends on Co(2+) as a cofactor.

Its subcellular location is the cytoplasm. The catalysed reaction is [amino-group carrier protein]-C-terminal-gamma-(L-lysyl)-L-glutamate + H2O = [amino-group carrier protein]-C-terminal-L-glutamate + L-lysine. The enzyme catalyses [amino-group carrier protein]-C-terminal-gamma-(L-ornithyl)-L-glutamate + H2O = [amino-group carrier protein]-C-terminal-L-glutamate + L-ornithine. It participates in amino-acid biosynthesis; L-lysine biosynthesis via AAA pathway; L-lysine from L-alpha-aminoadipate (Thermus route): step 5/5. The protein operates within amino-acid biosynthesis; L-arginine biosynthesis. In terms of biological role, catalyzes the release of L-lysine from [LysW]-gamma-L-lysine and the release of L-ornithine from [LysW]-L-ornithine. The protein is [LysW]-lysine/[LysW]-ornithine hydrolase of Saccharolobus islandicus (strain M.16.4 / Kamchatka #3) (Sulfolobus islandicus).